A 206-amino-acid polypeptide reads, in one-letter code: dCTP deaminase, dUMP-forming (206 aa).

DCTP is bound by residues 117–122 (RSSFGR), Asp-135, 143–145 (TLE), Gln-163, Tyr-177, Lys-184, and Gln-188. Catalysis depends on Glu-145, which acts as the Proton donor/acceptor.

It belongs to the dCTP deaminase family. In terms of assembly, homotrimer.

The catalysed reaction is dCTP + 2 H2O = dUMP + NH4(+) + diphosphate. Its pathway is pyrimidine metabolism; dUMP biosynthesis; dUMP from dCTP: step 1/1. Bifunctional enzyme that catalyzes both the deamination of dCTP to dUTP and the hydrolysis of dUTP to dUMP without releasing the toxic dUTP intermediate. The polypeptide is dCTP deaminase, dUMP-forming (Methanococcus maripaludis (strain DSM 14266 / JCM 13030 / NBRC 101832 / S2 / LL)).